A 321-amino-acid polypeptide reads, in one-letter code: Corticotropin-releasing factor-binding protein (321 aa).

The N-terminal stretch at 1–21 (MTPASRPDWCLILLFLAVLRG) is a signal peptide. Cystine bridges form between C59–C80, C103–C140, C182–C204, C237–C264, and C277–C317. N-linked (GlcNAc...) asparagine glycosylation occurs at N203.

It belongs to the CRF-binding protein family.

The protein resides in the secreted. Its function is as follows. Binds CRF and inactivates it. May prevent inappropriate pituitary-adrenal stimulation in pregnancy. This is Corticotropin-releasing factor-binding protein (crhbp) from Xenopus laevis (African clawed frog).